A 405-amino-acid polypeptide reads, in one-letter code: L-carnitine CoA-transferase (405 aa).

CoA is bound by residues lysine 97 and arginine 104. Residue aspartate 169 is the Nucleophile of the active site.

Belongs to the CoA-transferase III family. CaiB subfamily. In terms of assembly, homodimer.

Its subcellular location is the cytoplasm. It catalyses the reaction crotonobetainyl-CoA + (R)-carnitine = crotonobetaine + (R)-carnitinyl-CoA. The enzyme catalyses 4-(trimethylamino)butanoyl-CoA + (R)-carnitine = (R)-carnitinyl-CoA + 4-(trimethylamino)butanoate. It participates in amine and polyamine metabolism; carnitine metabolism. Its function is as follows. Catalyzes the reversible transfer of the CoA moiety from gamma-butyrobetainyl-CoA to L-carnitine to generate L-carnitinyl-CoA and gamma-butyrobetaine. Is also able to catalyze the reversible transfer of the CoA moiety from gamma-butyrobetainyl-CoA or L-carnitinyl-CoA to crotonobetaine to generate crotonobetainyl-CoA. The protein is L-carnitine CoA-transferase (caiB) of Escherichia coli O157:H7.